The sequence spans 135 residues: Single-stranded DNA-binding protein RIM1, mitochondrial (135 aa).

A mitochondrion-targeting transit peptide spans 1 to 17; it reads MFLRTQARFFHATTKKM. In terms of domain architecture, SSB spans 19 to 117; it reads FSKMSIVGRI…LVQKDINLLK (99 aa).

As to quaternary structure, homotetramer. Interacts with PIF1.

The protein resides in the mitochondrion. Functionally, this protein binds preferentially and cooperatively to single-stranded DNA (ssDNS). Involved in mitochondrial DNA replication. Stimulates PIF1 helicase activity. The protein is Single-stranded DNA-binding protein RIM1, mitochondrial (RIM1) of Saccharomyces cerevisiae (strain ATCC 204508 / S288c) (Baker's yeast).